A 486-amino-acid polypeptide reads, in one-letter code: Cysteine--tRNA ligase (486 aa).

Cys29 lines the Zn(2+) pocket. The short motif at 31–41 is the 'HIGH' region element; sequence VTVYDYCHLGH. Residues Cys217, His242, and Glu246 each contribute to the Zn(2+) site. A 'KMSKS' region motif is present at residues 274–278; it reads KMSKS. Residue Lys277 participates in ATP binding.

This sequence belongs to the class-I aminoacyl-tRNA synthetase family. As to quaternary structure, monomer. Zn(2+) serves as cofactor.

The protein resides in the cytoplasm. The enzyme catalyses tRNA(Cys) + L-cysteine + ATP = L-cysteinyl-tRNA(Cys) + AMP + diphosphate. This is Cysteine--tRNA ligase from Thermosynechococcus vestitus (strain NIES-2133 / IAM M-273 / BP-1).